Here is a 255-residue protein sequence, read N- to C-terminus: uncharacterized protein (255 aa).

An N-terminal signal peptide occupies residues M1–G23. The N-palmitoyl cysteine moiety is linked to residue C24. A lipid anchor (S-diacylglycerol cysteine) is attached at C24.

Belongs to the staphylococcal tandem lipoprotein family.

Its subcellular location is the cell membrane. This is an uncharacterized protein from Staphylococcus aureus (strain N315).